A 90-amino-acid polypeptide reads, in one-letter code: MKILIFIIASFMLIGVECKEGYPTNSEGCKITCLFNDPYCKGKCINLSTQADKKWKGVEGYCNRRDIACYCKNLPENAEVWDPNNNKCVG.

The signal sequence occupies residues 1-18 (MKILIFIIASFMLIGVEC). The LCN-type CS-alpha/beta domain occupies 19–89 (KEGYPTNSEG…VWDPNNNKCV (71 aa)). Cystine bridges form between Cys29–Cys88, Cys33–Cys62, Cys40–Cys69, and Cys44–Cys71.

This sequence belongs to the long (4 C-C) scorpion toxin superfamily. Sodium channel inhibitor family. Beta subfamily. Expressed by the venom gland.

The protein resides in the secreted. In terms of biological role, beta toxins bind voltage-independently at site-4 of sodium channels (Nav) and shift the voltage of activation toward more negative potentials thereby affecting sodium channel activation and promoting spontaneous and repetitive firing. This chain is Putative beta-neurotoxin RjAa14F, found in Rhopalurus junceus (Caribbean blue scorpion).